We begin with the raw amino-acid sequence, 510 residues long: 11S globulin (510 aa).

The first 23 residues, 1–23, serve as a signal peptide directing secretion; sequence MAKPILLSISLCLVALVNGCLAQ. Disulfide bonds link Cys35-Cys68 and Cys111-Cys325. The Cupin type-1 1 domain occupies 38–257; the sequence is KRLVALEPSN…AFNVDTETAR (220 aa). Disordered stretches follow at residues 194–239 and 284–319; these read AGNP…VFSG and WSRE…DDNG. A compositionally biased stretch (basic and acidic residues) spans 284 to 318; sequence WSREEQEREERKERERERESESERRQSRRGGRDDN. An NGXEET; peptidase recognition motif motif is present at residues 318–323; that stretch reads NGLEET. The 150-residue stretch at 331–480 folds into the Cupin type-1 2 domain; the sequence is ENIGDPSRAD…ALQIPREDAR (150 aa). The segment at 487 to 510 is disordered; it reads QESTLVRSRPSSSRSSRSERRAEV.

It belongs to the 11S seed storage protein (globulins) family. Homohexamer. Can assemble in other multimeric configurations. Proteolytically processed from a single precursor to produce an acidic and a basic chain that are linked by a disulfide bond. Expressed in endosperm of the seed.

Functionally, seed storage protein. The chain is 11S globulin from Juglans nigra (Black walnut).